We begin with the raw amino-acid sequence, 233 residues long: Snake venom serine protease ussurase (233 aa).

Residues 1–224 form the Peptidase S1 domain; the sequence is VIGGVECNIN…YTDWIQSIIS (224 aa). 6 disulfides stabilise this stretch: Cys-7–Cys-138, Cys-25–Cys-41, Cys-73–Cys-231, Cys-117–Cys-185, Cys-149–Cys-164, and Cys-175–Cys-200. Catalysis depends on His-40, which acts as the Charge relay system. Asn-54 carries an N-linked (GlcNAc...) asparagine glycan. The active-site Charge relay system is the Asp-85. Ser-179 serves as the catalytic Charge relay system.

The protein belongs to the peptidase S1 family. Snake venom subfamily. Monomer. In terms of tissue distribution, expressed by the venom gland.

It localises to the secreted. In terms of biological role, snake venom serine protease that may act in the hemostasis system of the prey. The sequence is that of Snake venom serine protease ussurase from Gloydius ussuriensis (Ussuri mamushi).